A 159-amino-acid chain; its full sequence is Cytochrome c-type biogenesis protein CcmE (159 aa).

Residues 1–8 are Cytoplasmic-facing; that stretch reads MHPIRKKR. Residues 9–29 form a helical; Signal-anchor for type II membrane protein membrane-spanning segment; the sequence is LTIVLFLVAGIAIAVGLTTYA. The Periplasmic portion of the chain corresponds to 30 to 159; the sequence is LRQNINLFYD…VEKAAETTAY (130 aa). Positions 124 and 128 each coordinate heme. Positions 135 to 159 are disordered; that stretch reads EALERSSKGQHKSADVEKAAETTAY. Over residues 136 to 159 the composition is skewed to basic and acidic residues; the sequence is ALERSSKGQHKSADVEKAAETTAY.

This sequence belongs to the CcmE/CycJ family.

Its subcellular location is the cell inner membrane. Heme chaperone required for the biogenesis of c-type cytochromes. Transiently binds heme delivered by CcmC and transfers the heme to apo-cytochromes in a process facilitated by CcmF and CcmH. This chain is Cytochrome c-type biogenesis protein CcmE, found in Marinobacter nauticus (strain ATCC 700491 / DSM 11845 / VT8) (Marinobacter aquaeolei).